The primary structure comprises 480 residues: Glutamate--tRNA ligase (480 aa).

The 'HIGH' region signature appears at 21-31 (PSPTGYLHVGG). Zn(2+)-binding residues include Cys110, Cys112, Cys137, and His139. The 'KMSKS' region motif lies at 248–252 (KLSKR). Residue Lys251 coordinates ATP.

It belongs to the class-I aminoacyl-tRNA synthetase family. Glutamate--tRNA ligase type 1 subfamily. In terms of assembly, monomer. Zn(2+) is required as a cofactor.

Its subcellular location is the cytoplasm. It carries out the reaction tRNA(Glu) + L-glutamate + ATP = L-glutamyl-tRNA(Glu) + AMP + diphosphate. Functionally, catalyzes the attachment of glutamate to tRNA(Glu) in a two-step reaction: glutamate is first activated by ATP to form Glu-AMP and then transferred to the acceptor end of tRNA(Glu). This Haemophilus influenzae (strain 86-028NP) protein is Glutamate--tRNA ligase.